A 287-amino-acid polypeptide reads, in one-letter code: Endolytic peptidoglycan transglycosylase RlpA (287 aa).

The first 25 residues, 1 to 25 (MKLKTGLNLTALLLFMISVAFPAQA), serve as a signal peptide directing secretion. Residues 209 to 284 (LKGTEFYCLK…ANNKPLIVYT (76 aa)) enclose the SPOR domain.

It belongs to the RlpA family.

In terms of biological role, lytic transglycosylase with a strong preference for naked glycan strands that lack stem peptides. This chain is Endolytic peptidoglycan transglycosylase RlpA, found in Haemophilus influenzae (strain ATCC 51907 / DSM 11121 / KW20 / Rd).